The sequence spans 102 residues: Small ribosomal subunit protein uS10 (102 aa).

It belongs to the universal ribosomal protein uS10 family. In terms of assembly, part of the 30S ribosomal subunit.

Its function is as follows. Involved in the binding of tRNA to the ribosomes. This is Small ribosomal subunit protein uS10 from Exiguobacterium sibiricum (strain DSM 17290 / CCUG 55495 / CIP 109462 / JCM 13490 / 255-15).